The sequence spans 344 residues: FCS-Like Zinc finger 10 (344 aa).

The FLZ-type zinc finger occupies 270 to 314 (DFLSFCYGCSKKLGMGEDIYMYSGYKAFCSSECRSKEIDLDEEME). A compositionally biased stretch (acidic residues) spans 309–320 (LDEEMEDGDEEE). A disordered region spans residues 309–344 (LDEEMEDGDEEEAIKSVSSSDKESKKKSNGVFFTVG).

Belongs to the FLZ family. In terms of assembly, interacts with KIN10 and KIN11 via its FLZ-type zinc finger domain. Interacts with KINB1, KINB2 and KINB3 via its N-terminal part. Forms homodimer and heterodimer with FLZ2 and FLZ12 in vitro. Early expressed in hypocotyl and cotyledon and preferentially in the stelar region of the shoot and root. Later expressed in root-shoot junction, lateral root, old or senescing leaves and in pistil and pollen of flower buds or open flowers.

It localises to the cytoplasm. It is found in the nucleus. Its subcellular location is the endoplasmic reticulum. Its function is as follows. May act as an adapter to facilitate the interaction of SnRK1 complex with effector proteins, conferring tissue- and stimulus-type specific differences in the SnRK1 regulation pathway. Negatively regulates KIN10 leading to a repression of the SnRK1 signaling pathway. The sequence is that of FCS-Like Zinc finger 10 from Arabidopsis thaliana (Mouse-ear cress).